The following is a 104-amino-acid chain: N(4)-acetylcytidine amidohydrolase (104 aa).

Residues 6 to 96 (ITFYQRFEAD…TIYPNEHESW (91 aa)) enclose the ASCH domain. The active-site Proton acceptor is the Lys-21. Thr-24 serves as the catalytic Nucleophile. Glu-74 (proton donor) is an active-site residue.

This sequence belongs to the N(4)-acetylcytidine amidohydrolase family.

The catalysed reaction is N(4)-acetylcytidine + H2O = cytidine + acetate + H(+). It carries out the reaction N(4)-acetyl-2'-deoxycytidine + H2O = 2'-deoxycytidine + acetate + H(+). It catalyses the reaction N(4)-acetylcytosine + H2O = cytosine + acetate + H(+). Its function is as follows. Catalyzes the hydrolysis of N(4)-acetylcytidine (ac4C). The chain is N(4)-acetylcytidine amidohydrolase from Haemophilus influenzae (strain 86-028NP).